The chain runs to 165 residues: Neurotrophin-3 (165 aa).

The signal sequence occupies residues 1-3 (IQS). Positions 4–119 (TSMDQGSLSE…VLNRTSRRKR (116 aa)) are excised as a propeptide. Residues 32–61 (KVPKQAARTKDGTQTTAKKTEAEPEATANK) are disordered. N-linked (GlcNAc...) asparagine glycosylation is present at N112.

It belongs to the NGF-beta family.

The protein resides in the secreted. Seems to promote the survival of visceral and proprioceptive sensory neurons. The protein is Neurotrophin-3 (NTF3) of Xenopeltis unicolor (Sunbeam snake).